The following is a 290-amino-acid chain: 4-hydroxybenzoate octaprenyltransferase (290 aa).

Transmembrane regions (helical) follow at residues 23-43, 46-66, 99-119, 141-161, 163-183, 213-233, 234-254, and 268-288; these read IGAL…TPGV, LWIM…GCVV, LFVV…TMTI, LPQV…FAAV, ESVP…AVAY, LIIG…GELN, GLGW…VYQQ, and AFMN…MSYW.

The protein belongs to the UbiA prenyltransferase family. It depends on Mg(2+) as a cofactor.

The protein localises to the cell inner membrane. The enzyme catalyses all-trans-octaprenyl diphosphate + 4-hydroxybenzoate = 4-hydroxy-3-(all-trans-octaprenyl)benzoate + diphosphate. It functions in the pathway cofactor biosynthesis; ubiquinone biosynthesis. Functionally, catalyzes the prenylation of para-hydroxybenzoate (PHB) with an all-trans polyprenyl group. Mediates the second step in the final reaction sequence of ubiquinone-8 (UQ-8) biosynthesis, which is the condensation of the polyisoprenoid side chain with PHB, generating the first membrane-bound Q intermediate 3-octaprenyl-4-hydroxybenzoate. This Shigella flexneri protein is 4-hydroxybenzoate octaprenyltransferase.